The sequence spans 520 residues: Hydroxymethylglutaryl-CoA synthase, cytoplasmic (520 aa).

Residue Ser-4 is modified to Phosphoserine. Residue Ala-44 coordinates (3S)-3-hydroxy-3-methylglutaryl-CoA. Position 44–46 (44–46) interacts with CoA; sequence AGK. N6-acetyllysine is present on Lys-46. Glu-95 acts as the Proton donor/acceptor in catalysis. Positions 129, 167, 171, 221, and 264 each coordinate (3S)-3-hydroxy-3-methylglutaryl-CoA. Residue Cys-129 is the Acyl-thioester intermediate of the active site. Asn-167 contacts CoA. Ser-221 is a CoA binding site. The Proton donor/acceptor role is filled by His-264. The CoA site is built by Lys-269 and Lys-273. Residues Lys-273, Asn-343, and Ser-377 each coordinate (3S)-3-hydroxy-3-methylglutaryl-CoA. Lys-273 carries the post-translational modification N6-acetyllysine. Phosphothreonine is present on Thr-476. Residues 492–520 are disordered; the sequence is HIPSPAKKVPRLPATAAEPEAAVISNGEH. Ser-495 and Ser-516 each carry phosphoserine.

It belongs to the thiolase-like superfamily. HMG-CoA synthase family. As to quaternary structure, homodimer.

It is found in the cytoplasm. The enzyme catalyses acetoacetyl-CoA + acetyl-CoA + H2O = (3S)-3-hydroxy-3-methylglutaryl-CoA + CoA + H(+). It participates in metabolic intermediate biosynthesis; (R)-mevalonate biosynthesis; (R)-mevalonate from acetyl-CoA: step 2/3. Functionally, catalyzes the condensation of acetyl-CoA with acetoacetyl-CoA to form HMG-CoA, which is converted by HMG-CoA reductase (HMGCR) into mevalonate, a precursor for cholesterol synthesis. This Pongo abelii (Sumatran orangutan) protein is Hydroxymethylglutaryl-CoA synthase, cytoplasmic.